A 145-amino-acid chain; its full sequence is Large ribosomal subunit protein uL16 (145 aa).

This sequence belongs to the universal ribosomal protein uL16 family. As to quaternary structure, part of the 50S ribosomal subunit.

Functionally, binds 23S rRNA and is also seen to make contacts with the A and possibly P site tRNAs. The polypeptide is Large ribosomal subunit protein uL16 (Lachnospira eligens (strain ATCC 27750 / DSM 3376 / VPI C15-48 / C15-B4) (Eubacterium eligens)).